A 232-amino-acid polypeptide reads, in one-letter code: Large ribosomal subunit protein uL1 (232 aa).

It belongs to the universal ribosomal protein uL1 family. Part of the 50S ribosomal subunit.

Binds directly to 23S rRNA. The L1 stalk is quite mobile in the ribosome, and is involved in E site tRNA release. Its function is as follows. Protein L1 is also a translational repressor protein, it controls the translation of the L11 operon by binding to its mRNA. The polypeptide is Large ribosomal subunit protein uL1 (Cutibacterium acnes (strain DSM 16379 / KPA171202) (Propionibacterium acnes)).